The primary structure comprises 223 residues: Golgi to ER traffic protein 1 (223 aa).

Met-1 is a topological domain (lumenal). A helical membrane pass occupies residues 2-21 (SWVVAIAVVFVVVLKVLEYS). Topologically, residues 22-105 (TSYHDLVLQS…QIKGHLKKVK (84 aa)) are cytoplasmic. The stretch at 56–105 (ENKSISAQDNYAKWTKNNRKLDKLDKEITELGAQLKAHNEQIKGHLKKVK) forms a coiled coil. The helical transmembrane segment at 106–126 (LLLLTVPFLCFKLWKGKHIVY) threads the bilayer. The Lumenal segment spans residues 127–177 (NLPHHQMFPQLVAGVWSQGWLYLAILPLQLAKSIVTGSSFAIETASFPHMG). The helical transmembrane segment at 178 to 194 (VSLGIWLWALNSVISNI) threads the bilayer. Residues 195-223 (EFMTMQLWAKPVSKPSKKLEIVTDEIKVD) lie on the Cytoplasmic side of the membrane.

It belongs to the WRB/GET1 family. As to quaternary structure, component of the Golgi to ER traffic (GET) complex, which is composed of GET1, GET2 and GET3. Within the complex, GET1 and GET2 form a heterotetramer which is stabilized by phosphatidylinositol binding and which binds to the GET3 homodimer.

It localises to the endoplasmic reticulum membrane. The protein localises to the golgi apparatus membrane. In terms of biological role, required for the post-translational delivery of tail-anchored (TA) proteins to the endoplasmic reticulum. Together with GET2, acts as a membrane receptor for soluble GET3, which recognizes and selectively binds the transmembrane domain of TA proteins in the cytosol. The GET complex cooperates with the HDEL receptor ERD2 to mediate the ATP-dependent retrieval of resident ER proteins that contain a C-terminal H-D-E-L retention signal from the Golgi to the ER. This chain is Golgi to ER traffic protein 1, found in Candida glabrata (strain ATCC 2001 / BCRC 20586 / JCM 3761 / NBRC 0622 / NRRL Y-65 / CBS 138) (Yeast).